A 317-amino-acid polypeptide reads, in one-letter code: Transaldolase (317 aa).

Catalysis depends on lysine 132, which acts as the Schiff-base intermediate with substrate.

The protein belongs to the transaldolase family. Type 1 subfamily. In terms of assembly, homodimer.

The protein resides in the cytoplasm. The catalysed reaction is D-sedoheptulose 7-phosphate + D-glyceraldehyde 3-phosphate = D-erythrose 4-phosphate + beta-D-fructose 6-phosphate. The protein operates within carbohydrate degradation; pentose phosphate pathway; D-glyceraldehyde 3-phosphate and beta-D-fructose 6-phosphate from D-ribose 5-phosphate and D-xylulose 5-phosphate (non-oxidative stage): step 2/3. Transaldolase is important for the balance of metabolites in the pentose-phosphate pathway. The polypeptide is Transaldolase (Mannheimia succiniciproducens (strain KCTC 0769BP / MBEL55E)).